We begin with the raw amino-acid sequence, 342 residues long: uncharacterized protein (342 aa).

This is an uncharacterized protein from Acanthamoeba polyphaga (Amoeba).